The primary structure comprises 274 residues: Diaminopimelate epimerase (274 aa).

Substrate-binding residues include Asn11, Gln44, and Asn64. The Proton donor role is filled by Cys73. Substrate-binding positions include 74–75, Asn157, Asn190, and 208–209; these read GN and ER. Cys217 functions as the Proton acceptor in the catalytic mechanism. Residue 218-219 coordinates substrate; sequence GS.

The protein belongs to the diaminopimelate epimerase family. As to quaternary structure, homodimer.

Its subcellular location is the cytoplasm. The catalysed reaction is (2S,6S)-2,6-diaminopimelate = meso-2,6-diaminopimelate. Its pathway is amino-acid biosynthesis; L-lysine biosynthesis via DAP pathway; DL-2,6-diaminopimelate from LL-2,6-diaminopimelate: step 1/1. Functionally, catalyzes the stereoinversion of LL-2,6-diaminopimelate (L,L-DAP) to meso-diaminopimelate (meso-DAP), a precursor of L-lysine and an essential component of the bacterial peptidoglycan. In Erwinia tasmaniensis (strain DSM 17950 / CFBP 7177 / CIP 109463 / NCPPB 4357 / Et1/99), this protein is Diaminopimelate epimerase.